The sequence spans 276 residues: ATP synthase subunit a (276 aa).

6 consecutive transmembrane segments (helical) span residues 47–67 (WHIDSLLFSVGLGVLFLWLFY), 107–127 (IAPLGLTIFVWVFLMNLMDLI), 152–172 (DLNVTLGLALSVFVLIVFYSI), 188–208 (PFNHWALIPINFVLETVTLIA), 226–246 (LIFILIALMPWWAQFALSVPW), and 247–267 (AIFHILVIVLQAFIFMMLTIV).

Belongs to the ATPase A chain family. F-type ATPases have 2 components, CF(1) - the catalytic core - and CF(0) - the membrane proton channel. CF(1) has five subunits: alpha(3), beta(3), gamma(1), delta(1), epsilon(1). CF(0) has three main subunits: a(1), b(2) and c(9-12). The alpha and beta chains form an alternating ring which encloses part of the gamma chain. CF(1) is attached to CF(0) by a central stalk formed by the gamma and epsilon chains, while a peripheral stalk is formed by the delta and b chains.

It localises to the cell inner membrane. Key component of the proton channel; it plays a direct role in the translocation of protons across the membrane. The polypeptide is ATP synthase subunit a (Shewanella halifaxensis (strain HAW-EB4)).